The chain runs to 62 residues: Sperm protamine P1 (62 aa).

The tract at residues Met1–Tyr62 is disordered.

Belongs to the protamine P1 family. In terms of tissue distribution, testis.

Its subcellular location is the nucleus. It is found in the chromosome. Its function is as follows. Protamines substitute for histones in the chromatin of sperm during the haploid phase of spermatogenesis. They compact sperm DNA into a highly condensed, stable and inactive complex. In Antechinomys laniger (Eastern jerboa marsupial), this protein is Sperm protamine P1 (PRM1).